We begin with the raw amino-acid sequence, 126 residues long: MMTDPISDMLTRIRNAQLALHKDVAIPYSKIKYSIANILKEEGYINELTLNNGTITLYFKYYKGKAAIEGLRRISKSGRRVYVSTHDIPSVQNGLGICILSTSIGVIGCNKARCSKVGGELLCEVW.

It belongs to the universal ribosomal protein uS8 family. Part of the 30S ribosomal subunit. Contacts proteins S5 and S12.

Its function is as follows. One of the primary rRNA binding proteins, it binds directly to 16S rRNA central domain where it helps coordinate assembly of the platform of the 30S subunit. The protein is Small ribosomal subunit protein uS8 of Lawsonia intracellularis (strain PHE/MN1-00).